A 228-amino-acid polypeptide reads, in one-letter code: MKKAVVLLSGGLDSTTCLALAKSQGFACYALSFSYGQRHSAELCAATRIAKHMGAADHKIVTLDTALFGGSALTDASIEVPEFKESPEIPVTYVPARNTIFLAMALGYAESIGARDIFIGASSVDYSHYPDCRPEFIESFQSLANLATKAGIEGDRFTINAPLQYLSKVQAIQLGTELGVDYGLTVSCYQANEAGEACGQCDSCTFRKRGFKSAGVDDPTRYQKCVHI.

8 to 18 (LSGGLDSTTCL) provides a ligand contact to ATP. The Zn(2+) site is built by Cys-188, Cys-198, Cys-201, and Cys-204.

The protein belongs to the QueC family. The cofactor is Zn(2+).

It carries out the reaction 7-carboxy-7-deazaguanine + NH4(+) + ATP = 7-cyano-7-deazaguanine + ADP + phosphate + H2O + H(+). It functions in the pathway purine metabolism; 7-cyano-7-deazaguanine biosynthesis. Its function is as follows. Catalyzes the ATP-dependent conversion of 7-carboxy-7-deazaguanine (CDG) to 7-cyano-7-deazaguanine (preQ(0)). This chain is 7-cyano-7-deazaguanine synthase, found in Legionella pneumophila (strain Paris).